We begin with the raw amino-acid sequence, 528 residues long: Glucose transporter 1E (528 aa).

Residues 1–22 are disordered; it reads MTERRDNVSHAPDAIEGPNDGA. Residues 1 to 43 lie on the Cytoplasmic side of the membrane; it reads MTERRDNVSHAPDAIEGPNDGAHAEETSPGFFSFENLGVAQVQ. The helical transmembrane segment at 44–64 threads the bilayer; sequence VVGGTLNGYVIGYVAVYLLLY. Residues 65-118 lie on the Extracellular side of the membrane; sequence LTATECKFTTEGACGGRKIYGCKWSGTTCKFENPKCSEGSDPSDSCKNEVAYTS. The helical transmembrane segment at 119–139 threads the bilayer; that stretch reads VYSGIFACAMIVGSMVGSIIA. The Cytoplasmic portion of the chain corresponds to 140 to 151; sequence GKCITTFGLKKS. The helical transmembrane segment at 152 to 172 threads the bilayer; it reads FIIVSITCTIACVVVQVAIEY. At 173–175 the chain is on the extracellular side; that stretch reads NNY. A helical membrane pass occupies residues 176–196; the sequence is YALCTGRVLIGLGVGILCSVF. The Cytoplasmic segment spans residues 197-213; it reads PMYVNENAHPKLCKMDG. The chain crosses the membrane as a helical span at residues 214 to 234; that stretch reads VLFQVFTTLGIMLAAMLGLIL. Residues 235 to 250 lie on the Extracellular side of the membrane; that stretch reads DKTGASKEEANMAGRL. A helical transmembrane segment spans residues 251-271; it reads HVFSAVPLGLSVAMFLVGMFL. Topologically, residues 272–301 are cytoplasmic; the sequence is RESTATFAQDDDGKADGGMDPNEYGWGQML. The chain crosses the membrane as a helical span at residues 302 to 322; sequence WPLFMGAVTAGTLQLTGINAV. Over 323–338 the chain is Extracellular; it reads MNYAPKITENLGMDPS. Residues 339 to 359 traverse the membrane as a helical segment; sequence LGNFLVMAWNFVTSLVAIPLA. The Cytoplasmic segment spans residues 360–367; it reads SRFTMRQM. Residues 368-388 traverse the membrane as a helical segment; it reads FITCSFVASCMCLFLCGIPVF. The Extracellular segment spans residues 389–403; sequence PGVAEEKVKNGVATT. A helical membrane pass occupies residues 404–424; it reads GIALFIAAFEFGVGSCFFVLA. The Cytoplasmic portion of the chain corresponds to 425–438; that stretch reads QDLFPPSFRPKGSS. The helical transmembrane segment at 439–459 threads the bilayer; it reads FVVMMQFIFNILINLLYPITT. At 460–475 the chain is on the extracellular side; sequence EAISGGATGDQDKGQA. Residues 476–496 traverse the membrane as a helical segment; sequence VVFILFGLIGLICFVLQFFYL. The Cytoplasmic portion of the chain corresponds to 497-528; it reads YPYDANQDHENDHGTEPVERILSPVDVPTPRN. Positions 507–528 are disordered; that stretch reads NDHGTEPVERILSPVDVPTPRN.

It belongs to the major facilitator superfamily. Sugar transporter (TC 2.A.1.1) family.

It is found in the membrane. Its function is as follows. Facilitative glucose transporter. This is Glucose transporter 1E (THT1E) from Trypanosoma brucei brucei.